The following is a 473-amino-acid chain: ATP synthase subunit beta (473 aa).

ATP is bound at residue 153–160; the sequence is GGAGVGKT.

It belongs to the ATPase alpha/beta chains family. In terms of assembly, F-type ATPases have 2 components, CF(1) - the catalytic core - and CF(0) - the membrane proton channel. CF(1) has five subunits: alpha(3), beta(3), gamma(1), delta(1), epsilon(1). CF(0) has three main subunits: a(1), b(2) and c(9-12). The alpha and beta chains form an alternating ring which encloses part of the gamma chain. CF(1) is attached to CF(0) by a central stalk formed by the gamma and epsilon chains, while a peripheral stalk is formed by the delta and b chains.

Its subcellular location is the cell membrane. It carries out the reaction ATP + H2O + 4 H(+)(in) = ADP + phosphate + 5 H(+)(out). Produces ATP from ADP in the presence of a proton gradient across the membrane. The catalytic sites are hosted primarily by the beta subunits. The sequence is that of ATP synthase subunit beta from Rickettsia africae (strain ESF-5).